Reading from the N-terminus, the 517-residue chain is MKPNLKQWKQFMLFGICAWGLLFLVIFVYFTDSNSVEPVPSAFSYVESKKHFPLQGKQRAIMGAHQDQLFSYAIDDQDLLKEGILDSFIVGPGSMKKMAGADNYFESEQEFIMSKKTQKSTSNNHEDDDDEIYLHKNIDSVSGKKAPAYGKRYYHDTQRQHKKIRRNMQRKKQHMIEDSYDWNGFSSSMSKSFLQKLWKGNVSSKMLTPRLQKARREYLRANKLGVNFNGKQNSRKLNPQELLCVLKDRAQVKTLDGKDAPFSSLGWEKYFPKIALNKLYPHGFSTCAVVSSAGAILNSSLGAEIDSHDAVLRFNSAPTRNYEKDVGNKTTLRIINSQILTNPNHHFTDSSLYKDVTLIAWDPSPYYADLHMWYHKPDYNLFPPYEKHRKRNPDQPFYILHPKFTWELWKIIQENSNEKIQPNPPSSGFIGILIMMSMCRTVHVYEYIPSYRQTDLCHYHEQYYDAACTLGAYHPLLYEKMLIQRINQGTEDNLLRKGKVILPGFSSIHCPIKDHIT.

At 1–10 (MKPNLKQWKQ) the chain is on the cytoplasmic side. A helical; Signal-anchor for type II membrane protein membrane pass occupies residues 11–31 (FMLFGICAWGLLFLVIFVYFT). Topologically, residues 32–517 (DSNSVEPVPS…IHCPIKDHIT (486 aa)) are lumenal. Asn-201, Asn-298, and Asn-328 each carry an N-linked (GlcNAc...) asparagine glycan. Intrachain disulfides connect Cys-244-Cys-510, Cys-287-Cys-439, and Cys-457-Cys-468.

The protein belongs to the glycosyltransferase 29 family.

It is found in the golgi apparatus. It localises to the golgi stack membrane. The enzyme catalyses a beta-D-galactoside + CMP-N-acetyl-beta-neuraminate = an N-acetyl-alpha-neuraminyl-(2-&gt;6)-beta-D-galactosyl derivative + CMP + H(+). Transfers sialic acid from the donor of substrate CMP-sialic acid to galactose containing acceptor substrates. This Xenopus tropicalis (Western clawed frog) protein is Beta-galactoside alpha-2,6-sialyltransferase 2 (st6gal2).